Reading from the N-terminus, the 458-residue chain is E3 ubiquitin-protein ligase RNF25 (458 aa).

The 111-residue stretch at 18-128 folds into the RWD domain; it reads SEVEVLESIY…EKGKEILTDN (111 aa). Zn(2+) contacts are provided by Cys135, Cys138, Cys153, His155, Cys161, Cys197, and Cys200. The segment at 135 to 201 adopts an RING-type zinc-finger fold; the sequence is CVICLYGFQE…AVGVQCPVCR (67 aa). Disordered regions lie at residues 267–299 and 317–458; these read PPAPLEPESAIDVSRGSHQPSTLATKPSTTSAT and KTPG…EDGS. Polar residues-rich tracts occupy residues 282 to 299 and 362 to 372; these read GSHQPSTLATKPSTTSAT and LKGTSDTQKLQ. Basic and acidic residues-rich tracts occupy residues 377–388 and 412–423; these read PLKESMDLKPES and RTRDCAHWERAK. The segment covering 432 to 443 has biased composition (low complexity); the sequence is PRLPRGRGAYRP.

The protein belongs to the RNF25 family. In terms of assembly, interacts with UBE2D2, and may also interact with UBE2E1 and UBE2E3. Interacts with RELA/p65. Post-translationally, ubiquitinated; autoubiquitinated.

The protein resides in the cytoplasm. The enzyme catalyses S-ubiquitinyl-[E2 ubiquitin-conjugating enzyme]-L-cysteine + [acceptor protein]-L-lysine = [E2 ubiquitin-conjugating enzyme]-L-cysteine + N(6)-ubiquitinyl-[acceptor protein]-L-lysine.. It participates in protein modification; protein ubiquitination. In terms of biological role, E3 ubiquitin-protein ligase that plays a key role in the RNF14-RNF25 translation quality control pathway, a pathway that takes place when a ribosome has stalled during translation, and which promotes ubiquitination and degradation of translation factors on stalled ribosomes. Catalyzes ubiquitination of RPS27A in response to ribosome collisions, promoting activation of RNF14. RNF25 catalyzes ubiquitination of other ribosomal proteins on stalled ribosomes, such as RPL0, RPL1, RPL12, RPS13 and RPS17. Also involved in ubiquitination and degradation of stalled ETF1/eRF1. Independently of its function in the response to stalled ribosomes, mediates ubiquitination and subsequent proteasomal degradation of NKD2. May also stimulate transcription mediated by NF-kappa-B via its interaction with RELA/p65. The chain is E3 ubiquitin-protein ligase RNF25 (RNF25) from Bos taurus (Bovine).